A 115-amino-acid polypeptide reads, in one-letter code: Double-headed protease inhibitor, submandibular gland (115 aa).

2 consecutive Kazal-like domains span residues 6–66 (IGRE…ACDI) and 67–115 (ECTE…HGEC). Cystine bridges form between Cys12–Cys46, Cys24–Cys43, Cys32–Cys64, Cys68–Cys97, Cys75–Cys94, and Cys83–Cys115.

The protein localises to the secreted. Its function is as follows. This inhibitor is composed of two homologous actively inhibiting halves: one which inhibits trypsin, the other which inhibits elastase. The protein is Double-headed protease inhibitor, submandibular gland of Canis lupus familiaris (Dog).